The primary structure comprises 404 residues: Probable tRNA sulfurtransferase (404 aa).

The region spanning 60 to 165 (QPIVEALKLV…DEAAYISYEE (106 aa)) is the THUMP domain. ATP is bound by residues 183 to 184 (ML), 208 to 209 (HF), Arg265, Gly287, and Gln296.

It belongs to the ThiI family.

Its subcellular location is the cytoplasm. It catalyses the reaction [ThiI sulfur-carrier protein]-S-sulfanyl-L-cysteine + a uridine in tRNA + 2 reduced [2Fe-2S]-[ferredoxin] + ATP + H(+) = [ThiI sulfur-carrier protein]-L-cysteine + a 4-thiouridine in tRNA + 2 oxidized [2Fe-2S]-[ferredoxin] + AMP + diphosphate. It carries out the reaction [ThiS sulfur-carrier protein]-C-terminal Gly-Gly-AMP + S-sulfanyl-L-cysteinyl-[cysteine desulfurase] + AH2 = [ThiS sulfur-carrier protein]-C-terminal-Gly-aminoethanethioate + L-cysteinyl-[cysteine desulfurase] + A + AMP + 2 H(+). It participates in cofactor biosynthesis; thiamine diphosphate biosynthesis. Catalyzes the ATP-dependent transfer of a sulfur to tRNA to produce 4-thiouridine in position 8 of tRNAs, which functions as a near-UV photosensor. Also catalyzes the transfer of sulfur to the sulfur carrier protein ThiS, forming ThiS-thiocarboxylate. This is a step in the synthesis of thiazole, in the thiamine biosynthesis pathway. The sulfur is donated as persulfide by IscS. This chain is Probable tRNA sulfurtransferase, found in Streptococcus pyogenes serotype M1.